Consider the following 865-residue polypeptide: General transcription factor 3C polypeptide 5 (865 aa).

5 disordered regions span residues 1-21 (MNDETNKNNSNINNNNNNNNS), 111-163 (RPNK…NEKF), 191-215 (NNNTKSESDNVNDSSSSSSSKTVPI), 391-522 (QDNH…NKEG), and 669-865 (DNKM…EESE). Composition is skewed to low complexity over residues 7–21 (KNNSNINNNNNNNNS), 115–126 (QQTQTQTQTQTQ), 140–158 (QSPKTTSRSKQQQQQQQPQ), 199–210 (DNVNDSSSSSSS), and 401–411 (SKNNNNNNNNK). Basic and acidic residues-rich tracts occupy residues 412–439 (DSIKNKEKDNSNKEDKEHKEDKEDKQEE) and 448–489 (NNEK…KGDD). Low complexity-rich tracts occupy residues 508-521 (EGNNNNNNNNNNKE) and 677-696 (RSNTSTATTTSTKSTQPKST). Composition is skewed to basic and acidic residues over residues 697–713 (QPKEPKLKSTQPKEPRP), 757–766 (QNKEIDESLK), and 773–786 (MEKDNEYLHGKNEE). Acidic residues-rich tracts occupy residues 800–820 (DYDDDDDDEDKPFELLDDFDG) and 839–865 (EDSEEDESDFDEEEEEEEEDFEFEESE).

It belongs to the TFIIIC subunit 5 family. Part of the TFIIIC complex.

It localises to the nucleus. Its function is as follows. Involved in RNA polymerase III-mediated transcription. Integral, tightly associated component of the DNA-binding TFIIIC2 subcomplex that directly binds tRNA and virus-associated RNA promoters. This chain is General transcription factor 3C polypeptide 5 (gtf3c5), found in Dictyostelium discoideum (Social amoeba).